The following is a 160-amino-acid chain: V-type proton ATPase subunit c (160 aa).

At M1–Y8 the chain is on the vacuolar side. The chain crosses the membrane as a helical span at residues A9–G31. Residues T32–N53 lie on the Cytoplasmic side of the membrane. Residues I54 to V74 form a helical membrane-spanning segment. At C75 to Q90 the chain is on the vacuolar side. The chain crosses the membrane as a helical span at residues L91–G112. Residues D113–R124 lie on the Cytoplasmic side of the membrane. A helical membrane pass occupies residues L125 to L150. Residues N151–C160 lie on the Vacuolar side of the membrane.

Belongs to the V-ATPase proteolipid subunit family. As to quaternary structure, V-ATPase is a heteromultimeric enzyme composed of a peripheral catalytic V1 complex (components A to H) attached to an integral membrane V0 proton pore complex (components: a, c, c', c'', d, e, f and VOA1). The decameric c-ring forms the proton-conducting pore, and is composed of eight proteolipid subunits c, one subunit c' and one subunit c''.

It is found in the vacuole membrane. In terms of biological role, proton-conducting pore forming subunit of the V0 complex of vacuolar(H+)-ATPase (V-ATPase), a multisubunit enzyme composed of a peripheral complex (V1) that hydrolyzes ATP and a membrane integral complex (V0) that translocates protons. V-ATPase is responsible for acidifying and maintaining the pH of intracellular compartments. This chain is V-type proton ATPase subunit c (VMA3), found in Saccharomyces cerevisiae (strain ATCC 204508 / S288c) (Baker's yeast).